The chain runs to 662 residues: Probable quinol oxidase subunit 1 (662 aa).

2 helical membrane-spanning segments follow: residues Trp14–Ile34 and Val58–Ile78. His102 provides a ligand contact to Fe(II)-heme a. The next 8 helical transmembrane spans lie at Gly103–Val123, Val140–Gly160, Ile187–Ile207, Phe228–Met248, Phe273–Tyr293, Met311–Phe331, Gly336–Val356, and Met376–Leu396. Cu cation contacts are provided by His279, Tyr283, His328, and His329. The segment at residues His279–Tyr283 is a cross-link (1'-histidyl-3'-tyrosine (His-Tyr)). His414 is a binding site for heme a3. 5 helical membrane-spanning segments follow: residues Phe415–Tyr435, Cys451–Leu471, Ile493–Val513, Pro587–Ile604, and Val608–Phe627. His416 is a Fe(II)-heme a binding site.

This sequence belongs to the heme-copper respiratory oxidase family. Cu cation serves as cofactor. The cofactor is ferriheme a. Heme A3. is required as a cofactor.

Its subcellular location is the cell membrane. It catalyses the reaction 2 a quinol + O2 = 2 a quinone + 2 H2O. It functions in the pathway energy metabolism; oxidative phosphorylation. Functionally, catalyzes quinol oxidation with the concomitant reduction of oxygen to water. This is Probable quinol oxidase subunit 1 (qoxB) from Staphylococcus aureus (strain COL).